A 327-amino-acid polypeptide reads, in one-letter code: Annexin A8 (327 aa).

Annexin repeat units lie at residues 21 to 92 (FNPD…ALMY), 93 to 164 (PPYR…CLLQ), 177 to 249 (GLAL…TVVK), and 253 to 324 (NVHS…NLVG). Residues Met266, Gly268, Gly270, and Asp310 each coordinate Ca(2+).

This sequence belongs to the annexin family.

Functionally, this protein is an anticoagulant protein that acts as an indirect inhibitor of the thromboplastin-specific complex, which is involved in the blood coagulation cascade. This Rattus norvegicus (Rat) protein is Annexin A8 (Anxa8).